Consider the following 68-residue polypeptide: uncharacterized protein (68 aa).

This sequence to bacterial proteins yidD.

This is an uncharacterized protein from Haemophilus influenzae (Bacteriophage HP1).